The primary structure comprises 164 residues: 4-hydroxy-4-methyl-2-oxoglutarate aldolase (164 aa).

Substrate contacts are provided by residues 74-77 (GGNL) and R96. D97 contributes to the a divalent metal cation binding site.

Belongs to the class II aldolase/RraA-like family. As to quaternary structure, homotrimer. The cofactor is Ni(2+). Co(2+) is required as a cofactor. Requires Zn(2+) as cofactor.

It carries out the reaction 4-hydroxy-4-methyl-2-oxoglutarate = 2 pyruvate. The catalysed reaction is oxaloacetate + H(+) = pyruvate + CO2. Competitively inhibited by oxalate, a pyruvate enolate analog. Catalyzes the aldol cleavage of 4-hydroxy-4-methyl-2-oxoglutarate (HMG) into 2 molecules of pyruvate. Also contains a secondary oxaloacetate (OAA) decarboxylase activity due to the common pyruvate enolate transition state formed following C-C bond cleavage in the retro-aldol and decarboxylation reactions. The chain is 4-hydroxy-4-methyl-2-oxoglutarate aldolase from Thermus thermophilus (strain ATCC 27634 / DSM 579 / HB8).